Here is a 621-residue protein sequence, read N- to C-terminus: MYGRDPWGGPLEINTADSATDDDRSRNLNDLDRAALSRPLDETQQSWLLGPTEQKKKKYVDLGCIIVSRKIFVWTVGTLVAAALLAGFITLIVKTVPRHHPKTPPPDNYTIALHKALKFFNAQKSGKLPKHNNVSWRGNSGLQDGKGETGSFYKDLVGGYYDAGDAIKFNFPMAYAMTMLSWSVIEYSAKYEAAGELTHVKELIKWGTDYFLKTFNSTADSIDDLVSQVGSGNTDDGNTDPNDHYCWMRPEDMDYKRPVTTCNGGCSDLAAEMAAALASASIVFKDNKEYSKKLVHGAKVVYQFGRTRRGRYSAGTAESSKFYNSSMYWDEFIWGGAWMYYATGNVTYLNLITQPTMAKHAGAFWGGPYYGVFSWDNKLAGAQLLLSRLRLFLSPGYPYEEILRTFHNQTSIVMCSYLPIFNKFNRTNGGLIELNHGAPQPLQYSVNAAFLATLYSDYLDAADTPGWYCGPNFYSTSVLRDFARSQIDYILGKNPRKMSYVVGFGTKYPRHVHHRGASIPKNKVKYNCKGGWKWRDSKKPNPNTIEGAMVAGPDKRDGYRDVRMNYNYTEPTLAGNAGLVAALVALSGEEEATGKIDKNTIFSAVPPLFPTPPPPPAPWKP.

The segment at M1–R26 is disordered. The Cytoplasmic segment spans residues M1 to K70. The tract at residues L48 to L49 is polarized targeting signal 1 (PTS1). The segment at Y59–L62 is polarized targeting signal 2 (PTS2). A helical; Signal-anchor for type II membrane protein membrane pass occupies residues I71 to L91. The Extracellular portion of the chain corresponds to I92 to P621. N108 and N133 each carry an N-linked (GlcNAc...) asparagine glycan. The active-site Nucleophile is the D165. N-linked (GlcNAc...) asparagine glycosylation is found at N216, N324, N345, N408, and N425. Catalysis depends on residues H513 and D561. N-linked (GlcNAc...) asparagine glycosylation is present at N567. E570 is a catalytic residue.

Belongs to the glycosyl hydrolase 9 (cellulase E) family. Post-translationally, glycosylated. N-glycosylation of KOR in the endoplasmic reticulum followed by N-glycan modifications in the Golgi are essential for catalytic activity. As to expression, highly expressed in roots and stems, at intermediate levels in leaves and flowers, and at lower levels in siliques. Expressed in xylem (at protein level).

Its subcellular location is the cell membrane. The catalysed reaction is Endohydrolysis of (1-&gt;4)-beta-D-glucosidic linkages in cellulose, lichenin and cereal beta-D-glucans.. Its function is as follows. Required for cellulose microfibril formation. Involved in cell wall assembly during cell elongation and cell plate maturation in cytokinesis. Required for secondary cell wall formation in the developing xylem. May cycle through different intracellular compartments, including plasma membrane. The polypeptide is Endoglucanase 25 (KOR) (Arabidopsis thaliana (Mouse-ear cress)).